A 75-amino-acid polypeptide reads, in one-letter code: Metallothionein-like protein 1 (75 aa).

It belongs to the metallothionein superfamily. Type 15 family.

In terms of biological role, metallothioneins have a high content of cysteine residues that bind various heavy metals. The chain is Metallothionein-like protein 1 (MTA) from Pisum sativum (Garden pea).